Consider the following 532-residue polypeptide: 2,3-bisphosphoglycerate-independent phosphoglycerate mutase (532 aa).

Mn(2+) contacts are provided by D15 and S65. The active-site Phosphoserine intermediate is S65. Residues H126, 156–157 (RD), R188, R194, 258–261 (RPDR), and K331 contribute to the substrate site. 5 residues coordinate Mn(2+): D398, H402, D439, H440, and H457.

The protein belongs to the BPG-independent phosphoglycerate mutase family. In terms of assembly, monomer. It depends on Mn(2+) as a cofactor.

It carries out the reaction (2R)-2-phosphoglycerate = (2R)-3-phosphoglycerate. Its pathway is carbohydrate degradation; glycolysis; pyruvate from D-glyceraldehyde 3-phosphate: step 3/5. In terms of biological role, catalyzes the interconversion of 2-phosphoglycerate and 3-phosphoglycerate. The chain is 2,3-bisphosphoglycerate-independent phosphoglycerate mutase from Cyanothece sp. (strain PCC 7425 / ATCC 29141).